Reading from the N-terminus, the 84-residue chain is Elongation factor 1-beta (84 aa).

This sequence belongs to the EF-1-beta/EF-1-delta family.

Promotes the exchange of GDP for GTP in EF-1-alpha/GDP, thus allowing the regeneration of EF-1-alpha/GTP that could then be used to form the ternary complex EF-1-alpha/GTP/AAtRNA. The sequence is that of Elongation factor 1-beta from Methanoculleus marisnigri (strain ATCC 35101 / DSM 1498 / JR1).